Here is a 251-residue protein sequence, read N- to C-terminus: Methylthioribulose-1-phosphate dehydratase (251 aa).

The disordered stretch occupies residues methionine 1–histidine 26. Positions asparagine 9–histidine 26 are enriched in basic and acidic residues. Cysteine 100 contributes to the substrate binding site. Residues histidine 118 and histidine 120 each contribute to the Zn(2+) site. Glutamate 142 acts as the Proton donor/acceptor in catalysis. A Zn(2+)-binding site is contributed by histidine 198. The interval methionine 232–glutamine 251 is disordered.

Belongs to the aldolase class II family. MtnB subfamily. Zn(2+) serves as cofactor.

Its subcellular location is the cytoplasm. The catalysed reaction is 5-(methylsulfanyl)-D-ribulose 1-phosphate = 5-methylsulfanyl-2,3-dioxopentyl phosphate + H2O. Its pathway is amino-acid biosynthesis; L-methionine biosynthesis via salvage pathway; L-methionine from S-methyl-5-thio-alpha-D-ribose 1-phosphate: step 2/6. Its function is as follows. Catalyzes the dehydration of methylthioribulose-1-phosphate (MTRu-1-P) into 2,3-diketo-5-methylthiopentyl-1-phosphate (DK-MTP-1-P). Functions in the methionine salvage pathway. May play a role in apoptosis. The chain is Methylthioribulose-1-phosphate dehydratase from Salmo salar (Atlantic salmon).